The chain runs to 156 residues: Cell division protein SepF (156 aa).

The span at 23 to 36 (SYEKEQTDMKKQQD) shows a compositional bias: basic and acidic residues. The interval 23–48 (SYEKEQTDMKKQQDPPEQQDVTFPKA) is disordered. Residues 37–48 (PPEQQDVTFPKA) show a composition bias toward polar residues.

Belongs to the SepF family. Homodimer. Interacts with FtsZ.

Its subcellular location is the cytoplasm. Its function is as follows. Cell division protein that is part of the divisome complex and is recruited early to the Z-ring. Probably stimulates Z-ring formation, perhaps through the cross-linking of FtsZ protofilaments. Its function overlaps with FtsA. This is Cell division protein SepF from Bacillus cereus (strain ATCC 10987 / NRS 248).